The following is a 502-amino-acid chain: Aspartyl/glutamyl-tRNA(Asn/Gln) amidotransferase subunit B (502 aa).

This sequence belongs to the GatB/GatE family. GatB subfamily. In terms of assembly, heterotrimer of A, B and C subunits.

The catalysed reaction is L-glutamyl-tRNA(Gln) + L-glutamine + ATP + H2O = L-glutaminyl-tRNA(Gln) + L-glutamate + ADP + phosphate + H(+). The enzyme catalyses L-aspartyl-tRNA(Asn) + L-glutamine + ATP + H2O = L-asparaginyl-tRNA(Asn) + L-glutamate + ADP + phosphate + 2 H(+). In terms of biological role, allows the formation of correctly charged Asn-tRNA(Asn) or Gln-tRNA(Gln) through the transamidation of misacylated Asp-tRNA(Asn) or Glu-tRNA(Gln) in organisms which lack either or both of asparaginyl-tRNA or glutaminyl-tRNA synthetases. The reaction takes place in the presence of glutamine and ATP through an activated phospho-Asp-tRNA(Asn) or phospho-Glu-tRNA(Gln). The protein is Aspartyl/glutamyl-tRNA(Asn/Gln) amidotransferase subunit B of Brucella suis (strain ATCC 23445 / NCTC 10510).